Consider the following 509-residue polypeptide: Maturase K (509 aa).

It belongs to the intron maturase 2 family. MatK subfamily.

The protein resides in the plastid. The protein localises to the chloroplast. Its function is as follows. Usually encoded in the trnK tRNA gene intron. Probably assists in splicing its own and other chloroplast group II introns. In Nicotiana sylvestris (Wood tobacco), this protein is Maturase K.